The following is a 335-amino-acid chain: Phosphatidylcholine-sterol acyltransferase (335 aa).

The first 18 residues, 1–18 (MKKWFVCLLGLVALTVQA), serve as a signal peptide directing secretion. Residue serine 34 is the Nucleophile of the active site. Residues aspartate 306 and histidine 309 contribute to the active site.

It belongs to the 'GDSL' lipolytic enzyme family.

The catalysed reaction is a sterol + a 1,2-diacyl-sn-glycero-3-phosphocholine = a sterol ester + a 1-acyl-sn-glycero-3-phosphocholine. Its function is as follows. Fatty acid transfer between phosphatidylcholine and cholesterol. The chain is Phosphatidylcholine-sterol acyltransferase from Aeromonas hydrophila.